Reading from the N-terminus, the 404-residue chain is Keratin, type I cuticular Ha3-I (404 aa).

Residues 1 to 56 (MPYNCCLPAMSCRTSCSSRPCVPPSCHGCTLPGACNIPANVGNCNWFCEGSFNGNE) are head. Positions 56–367 (EKETMQFLND…GLLESEDCKL (312 aa)) constitute an IF rod domain. The tract at residues 57 to 91 (KETMQFLNDRLASYMEKVRQLERENAELECRIQER) is coil 1A. A linker 1 region spans residues 92–102 (NQQQDPLVCPA). Residues 103 to 203 (YQAYFRTIEE…HEQEVNTLRC (101 aa)) are coil 1B. The tract at residues 204-219 (QLGDRLNVEVDAAPTV) is linker 12. The segment at 220-363 (DLNRVLNETR…NTYRGLLESE (144 aa)) is coil 2. The tail stretch occupies residues 364-404 (DCKLPCNPCATTNACDKPIGPCVPNPCVTRPRCGPCNTFVR).

This sequence belongs to the intermediate filament family.

This is Keratin, type I cuticular Ha3-I from Mus musculus (Mouse).